Reading from the N-terminus, the 1495-residue chain is Pregnancy zone protein (1495 aa).

A signal peptide spans 1–24; sequence MRRNQLPTPAFLLLFLLLPRDATT. Cys48 and Cys86 form a disulfide bridge. Residues Asn55 and Asn157 are each glycosylated (N-linked (GlcNAc...) asparagine). 2 disulfides stabilise this stretch: Cys249-Cys298 and Cys267-Cys286. N-linked (GlcNAc...) asparagine glycans are attached at residues Asn382, Asn405, and Asn412. Cys469 and Cys562 are disulfide-bonded. An N-linked (GlcNAc...) asparagine glycan is attached at Asn568. 6 cysteine pairs are disulfide-bonded: Cys594-Cys783, Cys642-Cys689, Cys833-Cys861, Cys859-Cys895, Cys933-Cys1339, and Cys1092-Cys1140. The interval 686–744 is bait region; the sequence is PRFCQEFQHYPAMGGVAPQALAVAASGPGSSFRAMGVPMMGLDYSDEINQVVEVRETVR. Residues Asn881 and Asn942 are each glycosylated (N-linked (GlcNAc...) asparagine). Residues 984–987 constitute a cross-link (isoglutamyl cysteine thioester (Cys-Gln)); it reads CGEQ. The N-linked (GlcNAc...) asparagine glycan is linked to Asn1003. N-linked (GlcNAc...) asparagine glycosylation is found at Asn1385 and Asn1443.

It belongs to the protease inhibitor I39 (alpha-2-macroglobulin) family. In terms of tissue distribution, highest expression in liver, medium expression in ovary, heart and stomach. Low expression in lung, kidney and uterus. Protein found in plasma.

The protein localises to the secreted. Its function is as follows. Is able to inhibit all four classes of proteinases by a unique 'trapping' mechanism. This protein has a peptide stretch, called the 'bait region' which contains specific cleavage sites for different proteinases. When a proteinase cleaves the bait region, a conformational change is induced in the protein which traps the proteinase. The entrapped enzyme remains active against low molecular weight substrates (activity against high molecular weight substrates is greatly reduced). Following cleavage in the bait region, a thioester bond is hydrolyzed and mediates the covalent binding of the protein to the proteinase. This chain is Pregnancy zone protein (Pzp), found in Mus musculus (Mouse).